The chain runs to 93 residues: Small ribosomal subunit protein uS19 (93 aa).

This sequence belongs to the universal ribosomal protein uS19 family.

Its function is as follows. Protein S19 forms a complex with S13 that binds strongly to the 16S ribosomal RNA. This chain is Small ribosomal subunit protein uS19, found in Ehrlichia ruminantium (strain Welgevonden).